The chain runs to 993 residues: UPF0182 protein ROP_64500 (993 aa).

7 helical membrane-spanning segments follow: residues 18 to 38 (VLLV…RLIS), 63 to 83 (LLLF…ALLL), 114 to 134 (LFGL…AQSS), 174 to 194 (WLFV…YIFG), 211 to 231 (VQLA…YWFD), 260 to 280 (KLIL…AIFL), and 288 to 308 (MATA…PLVV). A disordered region spans residues 904 to 948 (TGSVATAPSAEEGTPPETGTTPPVEQGAAPPAPTAPATPPSGTDV). A compositionally biased stretch (low complexity) spans 908 to 926 (ATAPSAEEGTPPETGTTPP). Pro residues predominate over residues 933-942 (PPAPTAPATP).

It belongs to the UPF0182 family.

It is found in the cell membrane. In Rhodococcus opacus (strain B4), this protein is UPF0182 protein ROP_64500.